The following is a 325-amino-acid chain: Endo-1,4-beta-xylanase 2 (325 aa).

The first 18 residues, 1-18 (MLYTSIFAAAMAASGAMA), serve as a signal peptide directing secretion. The GH10 domain maps to 26–325 (ASNCTTLDSF…KAAVKAIMAI (300 aa)). N28 carries N-linked (GlcNAc...) asparagine glycosylation. Residue E157 is the Proton donor of the active site. The Nucleophile role is filled by E262. A disulfide bridge connects residues C280 and C286.

This sequence belongs to the glycosyl hydrolase 10 (cellulase F) family.

Its subcellular location is the secreted. It carries out the reaction Endohydrolysis of (1-&gt;4)-beta-D-xylosidic linkages in xylans.. It participates in glycan degradation; xylan degradation. In terms of biological role, endo-1,4-beta-xylanase involved in the hydrolysis of xylan, a major structural heterogeneous polysaccharide found in plant biomass representing the second most abundant polysaccharide in the biosphere, after cellulose. The protein is Endo-1,4-beta-xylanase 2 (xyl2) of Claviceps purpurea (Ergot fungus).